The primary structure comprises 363 residues: Histone-lysine N-methyltransferase ASHH3 (363 aa).

An AWS domain is found at 63–114 (DDGIFCSCSSSSPGSSSTVCGSNCHCGMLFSSCSSSCKCGSECNNKPFQQRH). In terms of domain architecture, SET spans 116–233 (KKMKLIQTEK…KGEHLTYDYQ (118 aa)). One can recognise a Post-SET domain in the interval 239–255 (ADQDCHCGAVGCRRKLG).

The protein belongs to the class V-like SAM-binding methyltransferase superfamily. Histone-lysine methyltransferase family. SET2 subfamily.

It localises to the nucleus. It is found in the chromosome. The protein localises to the centromere. The catalysed reaction is L-lysyl-[histone] + S-adenosyl-L-methionine = N(6)-methyl-L-lysyl-[histone] + S-adenosyl-L-homocysteine + H(+). Its function is as follows. Histone methyltransferase. This Arabidopsis thaliana (Mouse-ear cress) protein is Histone-lysine N-methyltransferase ASHH3 (ASHH3).